The sequence spans 404 residues: CD209 antigen (404 aa).

Residues 1–37 are Cytoplasmic-facing; the sequence is MSDSKEPRLQQLGLLEEEQLRGLGFRQTRGYKSLAGC. 3 short sequence motifs (endocytosis signal) span residues 14 to 15, 16 to 18, and 31 to 34; these read LL, EEE, and YKSL. The chain crosses the membrane as a helical; Signal-anchor for type II membrane protein span at residues 38-58; sequence LGHGPLVLQLLSFTLLAGLLV. At 59-404 the chain is on the extracellular side; it reads QVSKVPSSIS…APATPNPPPA (346 aa). A glycan (N-linked (GlcNAc...) asparagine) is linked at Asn-80. 7 repeat units span residues 96–118, 119–141, 142–164, 165–187, 188–210, 211–233, and 234–257. A 7 X approximate tandem repeats region spans residues 96–257; the sequence is KLQEIYQELT…AVERLCHPCP (162 aa). 3 disulfides stabilise this stretch: Cys-256–Cys-267, Cys-284–Cys-377, and Cys-356–Cys-369. Positions 263–378 constitute a C-type lectin domain; the sequence is FQGNCYFMSN…CNLAKFWICK (116 aa). Residues Glu-347, Asn-349, Val-351, Glu-354, Asn-365, and Asp-366 each contribute to the Ca(2+) site.

In terms of assembly, homotetramer. Interacts with C1QBP; the interaction is indicative for a C1q:C1QBP:CD209 signaling complex. Interacts with ICAM2 and ICAM3 by binding to mannose-like carbohydrates. Interacts (via C-type lectin domain) with CEACAM1 (via Lewis X moieties); this interaction is regulated by the glycosylation pattern of CEACAM1 on cell types and regulates contact between dendritic cells and neutrophils. As to quaternary structure, (Microbial infection) Interacts with HIV-1 and HIV-2 gp120. (Microbial infection) Interacts with ebolavirus envelope glycoproteins. In terms of assembly, (Microbial infection) Interacts with cytomegalovirus gB protein. As to quaternary structure, (Microbial infection) Interacts with HCV E2 protein. (Microbial infection) Interacts with dengue virus major envelope protein E. In terms of assembly, (Microbial infection) Interacts with measles hemagglutinin. As to quaternary structure, (Microbial infection) Interacts with herpes simplex virus 1 surface proteins. (Microbial infection) Interacts with Influenzavirus A hemagglutinin. In terms of assembly, (Microbial infection) Interacts with SARS-CoV spike glycoprotein. As to quaternary structure, (Microbial infection) Interacts with Japanese encephalitis virus E protein. (Microbial infection) Interacts with Lassa virus Glycoprotein. In terms of assembly, (Microbial infection) Interacts with marburg virus glycoprotein. As to quaternary structure, (Microbial infection) Interacts with Respiratory syncytial virus glycoprotein G. (Microbial infection) Interacts with Rift valley fever virus and uukuniemi virus envelope glycoprotein. In terms of assembly, (Microbial infection) Interacts with west-nile virus envelope glycoprotein. As to quaternary structure, (Microbial infection) Interacts with whole M.bovis cells in a Ca(2+)-dependent and independent manner; in vitro experiments suggest it interacts with CH60.1 (groL1), DnaK, GADPH (gap) and LrpG. As to expression, predominantly expressed in dendritic cells and in DC-residing tissues. Also found in placental macrophages, endothelial cells of placental vascular channels, peripheral blood mononuclear cells, and THP-1 monocytes.

The protein resides in the cell membrane. Its subcellular location is the secreted. Its function is as follows. Pathogen-recognition receptor expressed on the surface of immature dendritic cells (DCs) and involved in initiation of primary immune response. Thought to mediate the endocytosis of pathogens which are subsequently degraded in lysosomal compartments. The receptor returns to the cell membrane surface and the pathogen-derived antigens are presented to resting T-cells via MHC class II proteins to initiate the adaptive immune response. In terms of biological role, on DCs it is a high affinity receptor for ICAM2 and ICAM3 by binding to mannose-like carbohydrates. May act as a DC rolling receptor that mediates transendothelial migration of DC presursors from blood to tissues by binding endothelial ICAM2. Seems to regulate DC-induced T-cell proliferation by binding to ICAM3 on T-cells in the immunological synapse formed between DC and T-cells. Functionally, (Microbial infection) Acts as an attachment receptor for HIV-1 and HIV-2. (Microbial infection) Acts as an attachment receptor for Ebolavirus. Its function is as follows. (Microbial infection) Acts as an attachment receptor for Cytomegalovirus. In terms of biological role, (Microbial infection) Acts as an attachment receptor for HCV. Functionally, (Microbial infection) Acts as an attachment receptor for Dengue virus. (Microbial infection) Acts as an attachment receptor for Measles virus. Its function is as follows. (Microbial infection) Acts as an attachment receptor for Herpes simplex virus 1. In terms of biological role, (Microbial infection) Acts as an attachment receptor for Influenzavirus A. Functionally, (Microbial infection) Acts as an attachment receptor for SARS-CoV. (Microbial infection) Acts as an attachment receptor for Japanese encephalitis virus. Its function is as follows. (Microbial infection) Acts as an attachment receptor for Lassa virus. Acts as an attachment receptor for Marburg virusn. In terms of biological role, (Microbial infection) Acts as an attachment receptor for Respiratory syncytial virus. Functionally, (Microbial infection) Acts as an attachment receptor for Rift valley fever virus and uukuniemi virus. (Microbial infection) Acts as an attachment receptor for West-nile virus. Its function is as follows. (Microbial infection) Probably recognizes in a calcium-dependent manner high mannose N-linked oligosaccharides in a variety of bacterial pathogen antigens, including Leishmania pifanoi LPG, Lewis-x antigen in Helicobacter pylori LPS, mannose in Klebsiella pneumonae LPS, di-mannose and tri-mannose in Mycobacterium tuberculosis ManLAM and Lewis-x antigen in Schistosoma mansoni SEA. Recognition of M.tuberculosis by dendritic cells occurs partially via this molecule. This is CD209 antigen (CD209) from Homo sapiens (Human).